A 179-amino-acid polypeptide reads, in one-letter code: Adenine phosphoribosyltransferase (179 aa).

This sequence belongs to the purine/pyrimidine phosphoribosyltransferase family. As to quaternary structure, homodimer.

The protein resides in the cytoplasm. The enzyme catalyses AMP + diphosphate = 5-phospho-alpha-D-ribose 1-diphosphate + adenine. It functions in the pathway purine metabolism; AMP biosynthesis via salvage pathway; AMP from adenine: step 1/1. Functionally, catalyzes a salvage reaction resulting in the formation of AMP, that is energically less costly than de novo synthesis. This chain is Adenine phosphoribosyltransferase, found in Actinobacillus pleuropneumoniae serotype 5b (strain L20).